Here is a 72-residue protein sequence, read N- to C-terminus: Translation initiation factor IF-1 (72 aa).

The region spanning 1–72 (MSKDDVIQMQ…SRARIVFRAK (72 aa)) is the S1-like domain.

Belongs to the IF-1 family. Component of the 30S ribosomal translation pre-initiation complex which assembles on the 30S ribosome in the order IF-2 and IF-3, IF-1 and N-formylmethionyl-tRNA(fMet); mRNA recruitment can occur at any time during PIC assembly.

Its subcellular location is the cytoplasm. Its function is as follows. One of the essential components for the initiation of protein synthesis. Stabilizes the binding of IF-2 and IF-3 on the 30S subunit to which N-formylmethionyl-tRNA(fMet) subsequently binds. Helps modulate mRNA selection, yielding the 30S pre-initiation complex (PIC). Upon addition of the 50S ribosomal subunit IF-1, IF-2 and IF-3 are released leaving the mature 70S translation initiation complex. The polypeptide is Translation initiation factor IF-1 (Methylibium petroleiphilum (strain ATCC BAA-1232 / LMG 22953 / PM1)).